The sequence spans 196 residues: Protein Flattop (196 aa).

A disordered region spans residues 107-196 (NGLRPEIFGK…PHAGRNLAEV (90 aa)). Positions 113 to 124 (IFGKPHDPDSQK) are enriched in basic and acidic residues. The segment covering 137–149 (APSPTIIPSSPAS) has biased composition (low complexity). Residues 150 to 162 (NLSSPDQLQSSHP) show a composition bias toward polar residues.

Belongs to the Flattop family. Microtubule inner protein component of sperm flagellar doublet microtubules. Interacts with DLG3. In terms of tissue distribution, expressed in trachea multiciliated cells.

It localises to the cytoplasm. The protein localises to the cytoskeleton. It is found in the cilium basal body. Its subcellular location is the cell projection. The protein resides in the cilium. It localises to the apical cell membrane. The protein localises to the cilium axoneme. It is found in the flagellum axoneme. Its function is as follows. Microtubule inner protein (MIP) part of the dynein-decorated doublet microtubules (DMTs) in cilia axoneme. Acts as a regulator of cilium basal body docking and positioning in mono- and multiciliated cells. Regulates basal body docking and cilia formation in multiciliated lung cells. Regulates kinocilium positioning and stereocilia bundle morphogenesis in the inner ear. The polypeptide is Protein Flattop (Bos taurus (Bovine)).